Here is a 138-residue protein sequence, read N- to C-terminus: Probable histone H2AXb (138 aa).

Residues 1–10 (MSSAGGGGGR) are compositionally biased toward gly residues. Residues 1–24 (MSSAGGGGGRGKSKGSKSVSRSSK) are disordered. Ser-135 bears the Phosphoserine; by ATM and ATR mark. A [ST]-Q motif motif is present at residues 135 to 136 (SQ).

It belongs to the histone H2A family. As to quaternary structure, the nucleosome is a histone octamer containing two molecules each of H2A, H2B, H3 and H4 assembled in one H3-H4 heterotetramer and two H2A-H2B heterodimers. The octamer wraps approximately 147 bp of DNA. Interacts with numerous proteins required for DNA damage signaling and repair when phosphorylated on Ser-135. Post-translationally, phosphorylated to form H2AXS139ph (gamma-H2AX) in response to DNA double strand breaks (DSBs) generated by exogenous genotoxic agents and by stalled replication forks, and may also occur during meiotic recombination events. Phosphorylation can extend up to several thousand nucleosomes from the actual site of the DSB and may mark the surrounding chromatin for recruitment of proteins required for DNA damage signaling and repair. Widespread phosphorylation may also serve to amplify the damage signal or aid repair of persistent lesions. H2AXS139ph in response to ionizing radiation is mediated by ATM while defects in DNA replication induce H2AXS139ph subsequent to activation of ATR. Dephosphorylation of H2AXS139ph by PP2A is required for DNA DSB repair.

Its subcellular location is the nucleus. The protein resides in the chromosome. Functionally, variant histone H2A which replaces conventional H2A in a subset of nucleosomes. Nucleosomes wrap and compact DNA into chromatin, limiting DNA accessibility to the cellular machineries which require DNA as a template. Histones thereby play a central role in transcription regulation, DNA repair, DNA replication and chromosomal stability. DNA accessibility is regulated via a complex set of post-translational modifications of histones, also called histone code, and nucleosome remodeling. Required for checkpoint-mediated arrest of cell cycle progression in response to low doses of ionizing radiation and for efficient repair of DNA double strand breaks (DSBs) specifically when modified by C-terminal phosphorylation. The chain is Probable histone H2AXb from Oryza sativa subsp. indica (Rice).